Consider the following 435-residue polypeptide: uncharacterized protein (435 aa).

12 consecutive transmembrane segments (helical) span residues 26 to 46, 61 to 81, 96 to 116, 119 to 139, 150 to 170, 177 to 197, 242 to 262, 281 to 301, 325 to 345, 347 to 367, 385 to 405, and 407 to 427; these read LLSG…VAAP, IVFS…GSLL, IWSF…LYLF, LIGL…ALWF, LFDS…AFLV, VAFL…WQYY, VWGL…LLTW, FTAV…GWLV, FGFF…IICI, IGLA…AELA, LFGG…TGSF, and LSFL…VFVL.

This sequence belongs to the major facilitator superfamily. Phthalate permease family.

It localises to the cell membrane. This is an uncharacterized protein from Bacillus subtilis (strain 168).